Consider the following 84-residue polypeptide: Small ribosomal subunit protein uS15 (84 aa).

This sequence belongs to the universal ribosomal protein uS15 family. In terms of assembly, part of the 30S ribosomal subunit. Forms a bridge to the 50S subunit in the 70S ribosome, contacting the 23S rRNA.

Its function is as follows. One of the primary rRNA binding proteins, it binds directly to 16S rRNA where it helps nucleate assembly of the platform of the 30S subunit by binding and bridging several RNA helices of the 16S rRNA. In terms of biological role, forms an intersubunit bridge (bridge B4) with the 23S rRNA of the 50S subunit in the ribosome. The protein is Small ribosomal subunit protein uS15 of Fervidobacterium nodosum (strain ATCC 35602 / DSM 5306 / Rt17-B1).